We begin with the raw amino-acid sequence, 445 residues long: Probable D-serine dehydratase (445 aa).

At Lys-111 the chain carries N6-(pyridoxal phosphate)lysine.

It belongs to the serine/threonine dehydratase family. DsdA subfamily. Pyridoxal 5'-phosphate is required as a cofactor.

The enzyme catalyses D-serine = pyruvate + NH4(+). This chain is Probable D-serine dehydratase, found in Burkholderia pseudomallei (strain 1106a).